Here is a 249-residue protein sequence, read N- to C-terminus: Caffeoyl-CoA O-methyltransferase (249 aa).

Substrate is bound at residue lysine 21. Residues threonine 63, glutamate 85, glycine 87–valine 88, serine 93, aspartate 111, and alanine 140 contribute to the S-adenosyl-L-methionine site. Aspartate 162 lines the substrate pocket. Position 162 (aspartate 162) interacts with a divalent metal cation. Aspartate 164 is an S-adenosyl-L-methionine binding site. Residues aspartate 188 and asparagine 189 each contribute to the a divalent metal cation site. Substrate is bound at residue asparagine 193.

This sequence belongs to the class I-like SAM-binding methyltransferase superfamily. Cation-dependent O-methyltransferase family. CCoAMT subfamily. Homodimer. A divalent metal cation is required as a cofactor.

It catalyses the reaction (E)-caffeoyl-CoA + S-adenosyl-L-methionine = (E)-feruloyl-CoA + S-adenosyl-L-homocysteine + H(+). It functions in the pathway aromatic compound metabolism; phenylpropanoid biosynthesis. Its function is as follows. Methylates caffeoyl-CoA to feruloyl-CoA and 5-hydroxyferuloyl-CoA to sinapoyl-CoA. Plays a role in the synthesis of feruloylated polysaccharides. Involved in the reinforcement of the plant cell wall. Also involved in the responding to wounding or pathogen challenge by the increased formation of cell wall-bound ferulic acid polymers. This chain is Caffeoyl-CoA O-methyltransferase, found in Eucalyptus gunnii (Cider gum).